Here is a 429-residue protein sequence, read N- to C-terminus: Adenylosuccinate synthetase (429 aa).

Residues 12–18 and 40–42 each bind GTP; these read GDEGKGK and GHT. Aspartate 13 acts as the Proton acceptor in catalysis. 2 residues coordinate Mg(2+): aspartate 13 and glycine 40. IMP-binding positions include 13–16, 38–41, threonine 128, arginine 142, glutamine 224, threonine 239, and arginine 303; these read DEGK and NAGH. Histidine 41 (proton donor) is an active-site residue. Residue 299–305 coordinates substrate; that stretch reads VTTGRPR. GTP contacts are provided by residues arginine 305, 331–333, and 413–415; these read LLD and SVG.

The protein belongs to the adenylosuccinate synthetase family. In terms of assembly, homodimer. The cofactor is Mg(2+).

It is found in the cytoplasm. The catalysed reaction is IMP + L-aspartate + GTP = N(6)-(1,2-dicarboxyethyl)-AMP + GDP + phosphate + 2 H(+). It functions in the pathway purine metabolism; AMP biosynthesis via de novo pathway; AMP from IMP: step 1/2. Its function is as follows. Plays an important role in the de novo pathway of purine nucleotide biosynthesis. Catalyzes the first committed step in the biosynthesis of AMP from IMP. The chain is Adenylosuccinate synthetase from Clostridioides difficile (strain 630) (Peptoclostridium difficile).